Consider the following 246-residue polypeptide: tRNA pseudouridine synthase A (246 aa).

D53 acts as the Nucleophile in catalysis. Y111 serves as a coordination point for substrate.

Belongs to the tRNA pseudouridine synthase TruA family. Homodimer.

The catalysed reaction is uridine(38/39/40) in tRNA = pseudouridine(38/39/40) in tRNA. Formation of pseudouridine at positions 38, 39 and 40 in the anticodon stem and loop of transfer RNAs. The protein is tRNA pseudouridine synthase A of Lysinibacillus sphaericus (strain C3-41).